Reading from the N-terminus, the 288-residue chain is Shikimate dehydrogenase (NADP(+)) (288 aa).

Shikimate is bound by residues 18 to 20 (SRS) and T65. Residue K69 is the Proton acceptor of the active site. Position 81 (E81) interacts with NADP(+). The shikimate site is built by N90 and D106. NADP(+)-binding positions include 131 to 135 (GAGGA), 155 to 160 (NRTLAK), and M223. Y225 contributes to the shikimate binding site. G246 provides a ligand contact to NADP(+).

This sequence belongs to the shikimate dehydrogenase family. Homodimer.

The catalysed reaction is shikimate + NADP(+) = 3-dehydroshikimate + NADPH + H(+). It participates in metabolic intermediate biosynthesis; chorismate biosynthesis; chorismate from D-erythrose 4-phosphate and phosphoenolpyruvate: step 4/7. Involved in the biosynthesis of the chorismate, which leads to the biosynthesis of aromatic amino acids. Catalyzes the reversible NADPH linked reduction of 3-dehydroshikimate (DHSA) to yield shikimate (SA). This Verminephrobacter eiseniae (strain EF01-2) protein is Shikimate dehydrogenase (NADP(+)).